Consider the following 475-residue polypeptide: Putative aldehyde dehydrogenase (475 aa).

NAD(+)-binding positions include 146–147 (WN) and 223–224 (GS). Catalysis depends on glutamate 245, which acts as the Proton acceptor. Residue leucine 246 participates in NAD(+) binding. Residue cysteine 279 is the Nucleophile of the active site. Glutamate 379 lines the NAD(+) pocket.

This sequence belongs to the aldehyde dehydrogenase family.

The enzyme catalyses an aldehyde + NAD(+) + H2O = a carboxylate + NADH + 2 H(+). The chain is Putative aldehyde dehydrogenase from Staphylococcus aureus (strain USA300).